The sequence spans 231 residues: Orotidine 5'-phosphate decarboxylase (231 aa).

Residues D12, K34, 61–70, T120, R181, Q190, G210, and R211 each bind substrate; that span reads DLKFHDIPNT. Residue K63 is the Proton donor of the active site.

Belongs to the OMP decarboxylase family. Type 1 subfamily. In terms of assembly, homodimer.

It carries out the reaction orotidine 5'-phosphate + H(+) = UMP + CO2. Its pathway is pyrimidine metabolism; UMP biosynthesis via de novo pathway; UMP from orotate: step 2/2. Functionally, catalyzes the decarboxylation of orotidine 5'-monophosphate (OMP) to uridine 5'-monophosphate (UMP). This Alcanivorax borkumensis (strain ATCC 700651 / DSM 11573 / NCIMB 13689 / SK2) protein is Orotidine 5'-phosphate decarboxylase.